A 169-amino-acid polypeptide reads, in one-letter code: CKLF-like MARVEL transmembrane domain-containing protein 2A (169 aa).

The next 4 membrane-spanning stretches (helical) occupy residues 40–60 (FWLS…ISAL), 69–89 (HPVL…FIFL), 98–118 (IPFV…CVFL), and 136–156 (YLTA…DMLL). One can recognise an MARVEL domain in the interval 40-162 (FWLSGHAVFK…DMLLQFQHFR (123 aa)).

It belongs to the chemokine-like factor family.

Its subcellular location is the membrane. This is CKLF-like MARVEL transmembrane domain-containing protein 2A (Cmtm2a) from Mus musculus (Mouse).